The following is a 443-amino-acid chain: Probable glucomannan 4-beta-mannosyltransferase 11 (443 aa).

D52 is a catalytic residue. Positions 111 and 113 each coordinate substrate. D205 is a catalytic residue. Helical transmembrane passes span 284–304 (IIVH…SVFF), 321–341 (ITLF…FWVL), 400–420 (EMMV…FGKT), and 421–441 (VLYI…IGFI).

It belongs to the glycosyltransferase 2 family. Plant cellulose synthase-like A subfamily.

The protein resides in the golgi apparatus membrane. It carries out the reaction GDP-mannose + (glucomannan)n = GDP + (glucomannan)n+1.. Its function is as follows. Probable mannan synthase which consists of a 4-beta-mannosyltransferase activity on mannan using GDP-mannose. The beta-1,4-mannan product is the backbone for galactomannan synthesis by galactomannan galactosyltransferase. Galactomannan is a noncellulosic polysaccharides of plant cell wall. The protein is Probable glucomannan 4-beta-mannosyltransferase 11 of Arabidopsis thaliana (Mouse-ear cress).